Consider the following 404-residue polypeptide: Beta-ketoacyl-[acyl-carrier-protein] synthase III, chloroplastic (404 aa).

The transit peptide at 1 to 43 (MANASGFFTHPSIPNLRSRIHVPVRVSGSGFCVSNRFSKRVLC) directs the protein to the chloroplast. Catalysis depends on residues cysteine 179, histidine 330, and asparagine 360.

It belongs to the thiolase-like superfamily. FabH family.

Its subcellular location is the plastid. The protein localises to the chloroplast. The enzyme catalyses malonyl-[ACP] + acetyl-CoA + H(+) = 3-oxobutanoyl-[ACP] + CO2 + CoA. It functions in the pathway lipid metabolism; fatty acid biosynthesis. Catalyzes the condensation reaction of fatty acid synthesis by the addition to an acyl acceptor of two carbons from malonyl-ACP. KAS III catalyzes the first condensation reaction which initiates fatty acid synthesis and may therefore play a role in governing the total rate of fatty acid production. Possesses both acetoacetyl-ACP synthase and acetyl transacylase activities. This chain is Beta-ketoacyl-[acyl-carrier-protein] synthase III, chloroplastic, found in Arabidopsis thaliana (Mouse-ear cress).